The chain runs to 349 residues: Small ribosomal subunit protein uS2 (349 aa).

The protein belongs to the universal ribosomal protein uS2 family.

The sequence is that of Small ribosomal subunit protein uS2 from Methylobacterium nodulans (strain LMG 21967 / CNCM I-2342 / ORS 2060).